A 129-amino-acid chain; its full sequence is UPF0148 protein APE_0207 (129 aa).

This sequence belongs to the UPF0148 family.

The protein is UPF0148 protein APE_0207 of Aeropyrum pernix (strain ATCC 700893 / DSM 11879 / JCM 9820 / NBRC 100138 / K1).